The following is a 576-amino-acid chain: Mycobactin import ATP-binding/permease protein IrtB (576 aa).

Topologically, residues 1–25 are cytoplasmic; it reads MIRTLIALVPADKRGTLGLYTVLTV. One can recognise an ABC transmembrane type-1 domain in the interval 19 to 299; the sequence is LYTVLTVLSV…LSELTPAIES (281 aa). The helical transmembrane segment at 26–46 threads the bilayer; that stretch reads LSVVIRAAGTVLLVPLVAALF. Residues 47–52 are Periplasmic-facing; sequence GDTPQD. Residues 53 to 73 form a helical membrane-spanning segment; it reads AWPWLGWLTAATAAGWIVDTT. Residues 74-131 lie on the Cytoplasmic side of the membrane; sequence TSRLGFDLGFAVLDHTQHDVADRMPNIRLDWLTAENTATARAAIASTGPELVGLVVNL. 2 helical membrane passes run 132 to 152 and 153 to 173; these read LTPL…LVAV and SPPL…AMWA. Over 174–241 the chain is Cytoplasmic; the sequence is SNRLSRKADT…RLLAMQIPGQ (68 aa). Residues 242–262 traverse the membrane as a helical segment; sequence LLFSLASQLALILLAGMATWL. The Periplasmic segment spans residues 263 to 267; the sequence is TVRGE. A helical membrane pass occupies residues 268-288; that stretch reads LSVPEAVAMIVVVARYLEPFT. The Cytoplasmic portion of the chain corresponds to 289 to 576; the sequence is SLSELTPAIE…HEAADWQITH (288 aa). Residues 332-565 form the ABC transporter domain; the sequence is IEFDCVTFGY…GGRFDEFWRR (234 aa). 364–371 contacts ATP; it reads GPSGSGKS.

The protein belongs to the ABC transporter superfamily. Siderophore-Fe(3+) uptake transporter (SIUT) (TC 3.A.1.21) family. In terms of assembly, forms a heterodimer with IrtA.

It localises to the cell inner membrane. Functionally, part of the ABC transporter complex IrtAB involved in the import of iron-bound mycobactin (Fe-MBT) and carboxymycobactin (Fe-cMBT). Has a preference for Fe-MBT over Fe-cMBT. Transmembrane domains (TMD) form a pore in the membrane and the ATP-binding domain (NBD) is responsible for energy generation. The protein is Mycobactin import ATP-binding/permease protein IrtB of Mycolicibacterium smegmatis (strain ATCC 700084 / mc(2)155) (Mycobacterium smegmatis).